The sequence spans 432 residues: MAPGREGELDRDFRVLMSLAHGFMVSQVLFAALDLGIFDLAAQGPVAAEAVAQTGGWSPRGTQLLMDACTRLGLLRGAGDGSYTNSALSSTFLVSGSPQSQRCMLLYLAGTTYGCWAHLAAGVREGRNQYSRAVGISAEDPFSAIYRSEPERLLFMRGLQETWSLCGGRVLTAFDLSRFRVICDLGGGSGALAQEAARLYPGSSVCVFDLPDVIAAARTHFLSPGARPSVRFVAGDFFRSRLPRADLFILARVLHDWADGACVELLGRLHRACRPGGALLLVEAVLAKGGAGPLRSLLLSLNMMLQAEGWERQASDYRNLATRAGFPRLQLRRPGGPYHAMLARRGPRPGIITGVGSNTTGTGSFVTGIRRDVPGARSDAAGTGSGTGNTGSGIMLQGETLESEVSAPQAGSDVGGAGNEPRSGTLKQGDWK.

Residues Y146, W163, D209, G235–F237, and R252 each bind S-adenosyl-L-methionine. Catalysis depends on H255, which acts as the Proton donor/acceptor. Residues D256, N302, and Q306 each contribute to the substrate site. The disordered stretch occupies residues V373–K432.

Belongs to the class I-like SAM-binding methyltransferase superfamily. Cation-independent O-methyltransferase family. As to quaternary structure, homodimer. As to expression, expressed predominantly in the pineal gland (at protein level). Very low expression, if any, in the retina.

The enzyme catalyses N-acetylserotonin + S-adenosyl-L-methionine = melatonin + S-adenosyl-L-homocysteine + H(+). Its pathway is aromatic compound metabolism; melatonin biosynthesis; melatonin from serotonin: step 1/2. Catalyzes the transfer of a methyl group onto N-acetylserotonin, producing melatonin (N-acetyl-5-methoxytryptamine). The protein is Acetylserotonin O-methyltransferase (Asmt) of Rattus norvegicus (Rat).